The following is a 391-amino-acid chain: Lipoyl synthase, mitochondrial (391 aa).

The transit peptide at 1–44 directs the protein to the mitochondrion; it reads MVHPHLSRTKRTFFSHSSQMISRHIRKTNSLAFVRALSASETAV. The [4Fe-4S] cluster site is built by Cys-120, Cys-125, Cys-131, Cys-150, Cys-154, Cys-157, and Ser-365. In terms of domain architecture, Radical SAM core spans 135-354; that stretch reads KKSEATATIM…KEVALEMGFL (220 aa).

It belongs to the radical SAM superfamily. Lipoyl synthase family. It depends on [4Fe-4S] cluster as a cofactor.

It localises to the mitochondrion. The enzyme catalyses [[Fe-S] cluster scaffold protein carrying a second [4Fe-4S](2+) cluster] + N(6)-octanoyl-L-lysyl-[protein] + 2 oxidized [2Fe-2S]-[ferredoxin] + 2 S-adenosyl-L-methionine + 4 H(+) = [[Fe-S] cluster scaffold protein] + N(6)-[(R)-dihydrolipoyl]-L-lysyl-[protein] + 4 Fe(3+) + 2 hydrogen sulfide + 2 5'-deoxyadenosine + 2 L-methionine + 2 reduced [2Fe-2S]-[ferredoxin]. It participates in protein modification; protein lipoylation via endogenous pathway; protein N(6)-(lipoyl)lysine from octanoyl-[acyl-carrier-protein]: step 2/2. In terms of biological role, catalyzes the radical-mediated insertion of two sulfur atoms into the C-6 and C-8 positions of the octanoyl moiety bound to the lipoyl domains of lipoate-dependent enzymes, thereby converting the octanoylated domains into lipoylated derivatives. The sequence is that of Lipoyl synthase, mitochondrial from Clavispora lusitaniae (strain ATCC 42720) (Yeast).